The following is a 275-amino-acid chain: Large ribosomal subunit protein uL2 (275 aa).

2 disordered regions span residues 34–59 and 223–275; these read LEKKSKSGGRNNNGRITTRHIGGGHK and VAMN…RNKK.

Belongs to the universal ribosomal protein uL2 family. As to quaternary structure, part of the 50S ribosomal subunit. Forms a bridge to the 30S subunit in the 70S ribosome.

Functionally, one of the primary rRNA binding proteins. Required for association of the 30S and 50S subunits to form the 70S ribosome, for tRNA binding and peptide bond formation. It has been suggested to have peptidyltransferase activity; this is somewhat controversial. Makes several contacts with the 16S rRNA in the 70S ribosome. This Teredinibacter turnerae (strain ATCC 39867 / T7901) protein is Large ribosomal subunit protein uL2.